We begin with the raw amino-acid sequence, 475 residues long: Ribulose bisphosphate carboxylase large chain (475 aa).

Residues 1–2 (MS) constitute a propeptide that is removed on maturation. P3 is modified (N-acetylproline). At K14 the chain carries N6,N6,N6-trimethyllysine. N123 and T173 together coordinate substrate. The active-site Proton acceptor is the K175. Residue K177 participates in substrate binding. 3 residues coordinate Mg(2+): K201, D203, and E204. Residue K201 is modified to N6-carboxylysine. The active-site Proton acceptor is H294. Residues R295, H327, and S379 each contribute to the substrate site.

It belongs to the RuBisCO large chain family. Type I subfamily. As to quaternary structure, heterohexadecamer of 8 large chains and 8 small chains; disulfide-linked. The disulfide link is formed within the large subunit homodimers. Requires Mg(2+) as cofactor. The disulfide bond which can form in the large chain dimeric partners within the hexadecamer appears to be associated with oxidative stress and protein turnover.

The protein resides in the plastid. It is found in the chloroplast. It catalyses the reaction 2 (2R)-3-phosphoglycerate + 2 H(+) = D-ribulose 1,5-bisphosphate + CO2 + H2O. It carries out the reaction D-ribulose 1,5-bisphosphate + O2 = 2-phosphoglycolate + (2R)-3-phosphoglycerate + 2 H(+). Its function is as follows. RuBisCO catalyzes two reactions: the carboxylation of D-ribulose 1,5-bisphosphate, the primary event in carbon dioxide fixation, as well as the oxidative fragmentation of the pentose substrate in the photorespiration process. Both reactions occur simultaneously and in competition at the same active site. The chain is Ribulose bisphosphate carboxylase large chain from Amborella trichopoda.